The following is a 492-amino-acid chain: Protein odr-4 homolog (492 aa).

Positions 251–270 are disordered; the sequence is LQPTSTTGGTATASSNTTDS. The segment covering 254 to 268 has biased composition (low complexity); it reads TSTTGGTATASSNTT. Residues 469–489 traverse the membrane as a helical segment; the sequence is MVGIAVALLVLLSSVALHFVL.

It belongs to the ODR-4 family.

The protein localises to the membrane. Functionally, may play a role in the trafficking of a subset of G-protein coupled receptors. This Drosophila melanogaster (Fruit fly) protein is Protein odr-4 homolog.